The chain runs to 521 residues: Bifunctional purine biosynthesis protein PurH (521 aa).

An MGS-like domain is found at 1 to 145; the sequence is MIKQALISVS…KNHRDVTVVV (145 aa).

The protein belongs to the PurH family.

The enzyme catalyses (6R)-10-formyltetrahydrofolate + 5-amino-1-(5-phospho-beta-D-ribosyl)imidazole-4-carboxamide = 5-formamido-1-(5-phospho-D-ribosyl)imidazole-4-carboxamide + (6S)-5,6,7,8-tetrahydrofolate. It carries out the reaction IMP + H2O = 5-formamido-1-(5-phospho-D-ribosyl)imidazole-4-carboxamide. It functions in the pathway purine metabolism; IMP biosynthesis via de novo pathway; 5-formamido-1-(5-phospho-D-ribosyl)imidazole-4-carboxamide from 5-amino-1-(5-phospho-D-ribosyl)imidazole-4-carboxamide (10-formyl THF route): step 1/1. Its pathway is purine metabolism; IMP biosynthesis via de novo pathway; IMP from 5-formamido-1-(5-phospho-D-ribosyl)imidazole-4-carboxamide: step 1/1. This chain is Bifunctional purine biosynthesis protein PurH, found in Burkholderia pseudomallei (strain 1710b).